We begin with the raw amino-acid sequence, 145 residues long: Large ribosomal subunit protein uL16 (145 aa).

This sequence belongs to the universal ribosomal protein uL16 family. Part of the 50S ribosomal subunit.

Functionally, binds 23S rRNA and is also seen to make contacts with the A and possibly P site tRNAs. The chain is Large ribosomal subunit protein uL16 from Shouchella clausii (strain KSM-K16) (Alkalihalobacillus clausii).